A 301-amino-acid chain; its full sequence is Bifunctional protein FolD (301 aa).

Residues 166–168 (GKS), S191, and I232 each bind NADP(+).

Belongs to the tetrahydrofolate dehydrogenase/cyclohydrolase family. As to quaternary structure, homodimer.

The enzyme catalyses (6R)-5,10-methylene-5,6,7,8-tetrahydrofolate + NADP(+) = (6R)-5,10-methenyltetrahydrofolate + NADPH. It catalyses the reaction (6R)-5,10-methenyltetrahydrofolate + H2O = (6R)-10-formyltetrahydrofolate + H(+). The protein operates within one-carbon metabolism; tetrahydrofolate interconversion. In terms of biological role, catalyzes the oxidation of 5,10-methylenetetrahydrofolate to 5,10-methenyltetrahydrofolate and then the hydrolysis of 5,10-methenyltetrahydrofolate to 10-formyltetrahydrofolate. The polypeptide is Bifunctional protein FolD (Orientia tsutsugamushi (strain Ikeda) (Rickettsia tsutsugamushi)).